The following is a 1477-amino-acid chain: Alpha-1-inhibitor 3 (1477 aa).

Positions 1 to 24 (MKKDREAQLCLFSALLAFLPFASL) are cleaved as a signal peptide. Cys-48 and Cys-86 are joined by a disulfide. 2 N-linked (GlcNAc...) asparagine glycosylation sites follow: Asn-55 and Asn-247. 2 disulfide bridges follow: Cys-251/Cys-295 and Cys-269/Cys-283. Asn-301, Asn-321, Asn-393, and Asn-508 each carry an N-linked (GlcNAc...) asparagine glycan. Disulfide bonds link Cys-468–Cys-563, Cys-595–Cys-774, and Cys-643–Cys-678. The interval 601–750 (DQSVLLQKPE…TWIWDLVTVN (150 aa)) is bait region (approximate). Residues Asn-750, Asn-777, and Asn-872 are each glycosylated (N-linked (GlcNAc...) asparagine). Intrachain disulfides connect Cys-850–Cys-886, Cys-924–Cys-1324, Cys-1082–Cys-1130, and Cys-1355–Cys-1470. The segment at residues 975-978 (CGEQ) is a cross-link (isoglutamyl cysteine thioester (Cys-Gln)). N-linked (GlcNAc...) asparagine glycosylation occurs at Asn-994. N-linked (GlcNAc...) asparagine glycans are attached at residues Asn-1143, Asn-1314, and Asn-1427.

This sequence belongs to the protease inhibitor I39 (alpha-2-macroglobulin) family. As to quaternary structure, monomer.

It localises to the secreted. Protease inhibitor with a wide spectrum of protein targets, which attaches through its thioester function. The polypeptide is Alpha-1-inhibitor 3 (A1i3) (Rattus norvegicus (Rat)).